The primary structure comprises 191 residues: Peptidyl-tRNA hydrolase (191 aa).

Y17 lines the tRNA pocket. H22 acts as the Proton acceptor in catalysis. TRNA is bound by residues Y68, N70, and N116.

This sequence belongs to the PTH family. Monomer.

Its subcellular location is the cytoplasm. The enzyme catalyses an N-acyl-L-alpha-aminoacyl-tRNA + H2O = an N-acyl-L-amino acid + a tRNA + H(+). Its function is as follows. Hydrolyzes ribosome-free peptidyl-tRNAs (with 1 or more amino acids incorporated), which drop off the ribosome during protein synthesis, or as a result of ribosome stalling. Functionally, catalyzes the release of premature peptidyl moieties from peptidyl-tRNA molecules trapped in stalled 50S ribosomal subunits, and thus maintains levels of free tRNAs and 50S ribosomes. This Mycobacterium ulcerans (strain Agy99) protein is Peptidyl-tRNA hydrolase.